A 299-amino-acid polypeptide reads, in one-letter code: Oxygen-dependent coproporphyrinogen-III oxidase (299 aa).

Serine 92 contacts substrate. A divalent metal cation-binding residues include histidine 96 and histidine 106. Residue histidine 106 is the Proton donor of the active site. 108–110 (NVR) lines the substrate pocket. The a divalent metal cation site is built by histidine 145 and histidine 175. An important for dimerization region spans residues 240–275 (YVEFNLVWDRGTLFGLQTGGRTESILMSMPPLVRWE). A substrate-binding site is contributed by 258 to 260 (GGR).

This sequence belongs to the aerobic coproporphyrinogen-III oxidase family. In terms of assembly, homodimer. It depends on a divalent metal cation as a cofactor.

It is found in the cytoplasm. The enzyme catalyses coproporphyrinogen III + O2 + 2 H(+) = protoporphyrinogen IX + 2 CO2 + 2 H2O. Its pathway is porphyrin-containing compound metabolism; protoporphyrin-IX biosynthesis; protoporphyrinogen-IX from coproporphyrinogen-III (O2 route): step 1/1. In terms of biological role, involved in the heme biosynthesis. Catalyzes the aerobic oxidative decarboxylation of propionate groups of rings A and B of coproporphyrinogen-III to yield the vinyl groups in protoporphyrinogen-IX. This chain is Oxygen-dependent coproporphyrinogen-III oxidase, found in Salmonella choleraesuis (strain SC-B67).